We begin with the raw amino-acid sequence, 218 residues long: Probable GTP-binding protein EngB (218 aa).

One can recognise an EngB-type G domain in the interval 44 to 218 (DRIEVCFAGR…LRATIATIET (175 aa)). GTP contacts are provided by residues 52–59 (GRSNVGKS), 79–83 (GRTQE), 97–100 (DLPG), 164–167 (TKSD), and 198–200 (TSS). Residues S59 and T81 each contribute to the Mg(2+) site.

This sequence belongs to the TRAFAC class TrmE-Era-EngA-EngB-Septin-like GTPase superfamily. EngB GTPase family. Requires Mg(2+) as cofactor.

Its function is as follows. Necessary for normal cell division and for the maintenance of normal septation. The polypeptide is Probable GTP-binding protein EngB (Jannaschia sp. (strain CCS1)).